We begin with the raw amino-acid sequence, 682 residues long: Potassium-transporting ATPase ATP-binding subunit (682 aa).

Transmembrane regions (helical) follow at residues 35 to 55 (VMFI…AMAG), 62 to 82 (ATFT…ANFA), 219 to 239 (IALT…TATI), and 254 to 274 (VLVA…LSAI). Residue D307 is the 4-aspartylphosphate intermediate of the active site. ATP-binding positions include D344, E348, 377–384 (FTAQTRMS), and K395. Residues D518 and D522 each contribute to the Mg(2+) site. The next 3 membrane-spanning stretches (helical) occupy residues 588–608 (FAII…LNVM), 616–636 (AILS…PLAL), and 656–676 (IYGL…DLLL).

Belongs to the cation transport ATPase (P-type) (TC 3.A.3) family. Type IA subfamily. As to quaternary structure, the system is composed of three essential subunits: KdpA, KdpB and KdpC.

The protein resides in the cell inner membrane. The catalysed reaction is K(+)(out) + ATP + H2O = K(+)(in) + ADP + phosphate + H(+). In terms of biological role, part of the high-affinity ATP-driven potassium transport (or Kdp) system, which catalyzes the hydrolysis of ATP coupled with the electrogenic transport of potassium into the cytoplasm. This subunit is responsible for energy coupling to the transport system and for the release of the potassium ions to the cytoplasm. This chain is Potassium-transporting ATPase ATP-binding subunit, found in Klebsiella pneumoniae subsp. pneumoniae (strain ATCC 700721 / MGH 78578).